A 143-amino-acid chain; its full sequence is Large ribosomal subunit protein uL15 (143 aa).

The interval 1–59 is disordered; that stretch reads MELNGIKPSLGAKHAKRRVGRGIGSGLGKTAGRGHKGQKSRAGGYHKVGFEGGQMPMQR. Over residues 21-31 the composition is skewed to gly residues; it reads RGIGSGLGKTA.

Belongs to the universal ribosomal protein uL15 family. Part of the 50S ribosomal subunit.

Binds to the 23S rRNA. The polypeptide is Large ribosomal subunit protein uL15 (Polaromonas sp. (strain JS666 / ATCC BAA-500)).